We begin with the raw amino-acid sequence, 280 residues long: 4-diphosphocytidyl-2-C-methyl-D-erythritol kinase (280 aa).

Lys11 is a catalytic residue. 95–105 (PVGAGLGGGSS) is a binding site for ATP. Asp137 is an active-site residue.

It belongs to the GHMP kinase family. IspE subfamily.

The catalysed reaction is 4-CDP-2-C-methyl-D-erythritol + ATP = 4-CDP-2-C-methyl-D-erythritol 2-phosphate + ADP + H(+). It functions in the pathway isoprenoid biosynthesis; isopentenyl diphosphate biosynthesis via DXP pathway; isopentenyl diphosphate from 1-deoxy-D-xylulose 5-phosphate: step 3/6. Its function is as follows. Catalyzes the phosphorylation of the position 2 hydroxy group of 4-diphosphocytidyl-2C-methyl-D-erythritol. In Citrifermentans bemidjiense (strain ATCC BAA-1014 / DSM 16622 / JCM 12645 / Bem) (Geobacter bemidjiensis), this protein is 4-diphosphocytidyl-2-C-methyl-D-erythritol kinase.